Consider the following 363-residue polypeptide: Peptide chain release factor 1 (363 aa).

Glutamine 237 is modified (N5-methylglutamine).

It belongs to the prokaryotic/mitochondrial release factor family. In terms of processing, methylated by PrmC. Methylation increases the termination efficiency of RF1.

It is found in the cytoplasm. Its function is as follows. Peptide chain release factor 1 directs the termination of translation in response to the peptide chain termination codons UAG and UAA. The polypeptide is Peptide chain release factor 1 (prfA) (Mycoplasma capricolum subsp. capricolum (strain California kid / ATCC 27343 / NCTC 10154)).